Here is a 64-residue protein sequence, read N- to C-terminus: Lectin-A (64 aa).

Chitin-binding type-1 domains follow at residues 1–20 (APEC…QVVT) and 22–45 (DFDD…NTDA).

Post-translationally, glycosylated.

N-acetyl-D-glucosamine binding lectin. Shows low hemagglutinating activity towards human erythrocytes. Has low mitogenic activity towards human peripheral blood lymphocytes. The protein is Lectin-A of Phytolacca americana (American pokeweed).